Reading from the N-terminus, the 474-residue chain is Probable periplasmic serine endoprotease DegP-like (474 aa).

An N-terminal signal peptide occupies residues 1–25 (MRNLKSVTPLLMAALLWGQSLLAQA). Residues His-113, Asp-143, and Ser-216 each act as charge relay system in the active site. Residues 214–216 (GNS) and 271–275 (LGVVI) contribute to the substrate site. PDZ domains follow at residues 260-351 (LKAD…VRDG) and 357-463 (KVTI…LRQG).

The protein belongs to the peptidase S1C family.

It localises to the periplasm. It catalyses the reaction Acts on substrates that are at least partially unfolded. The cleavage site P1 residue is normally between a pair of hydrophobic residues, such as Val-|-Val.. In terms of biological role, might be efficient in the degradation of transiently denatured and unfolded proteins which accumulate in the periplasm following stress conditions. The sequence is that of Probable periplasmic serine endoprotease DegP-like from Ectopseudomonas mendocina (strain ymp) (Pseudomonas mendocina).